Reading from the N-terminus, the 680-residue chain is DNA-directed RNA polymerase subunit beta' (680 aa).

Residues Cys68, Cys70, Cys86, and Cys89 each coordinate Zn(2+). Mg(2+)-binding residues include Asp488, Asp490, and Asp492.

The protein belongs to the RNA polymerase beta' chain family. RpoC1 subfamily. As to quaternary structure, in plastids the minimal PEP RNA polymerase catalytic core is composed of four subunits: alpha, beta, beta', and beta''. When a (nuclear-encoded) sigma factor is associated with the core the holoenzyme is formed, which can initiate transcription. Mg(2+) is required as a cofactor. The cofactor is Zn(2+).

It localises to the plastid. The protein resides in the chloroplast. It catalyses the reaction RNA(n) + a ribonucleoside 5'-triphosphate = RNA(n+1) + diphosphate. DNA-dependent RNA polymerase catalyzes the transcription of DNA into RNA using the four ribonucleoside triphosphates as substrates. This chain is DNA-directed RNA polymerase subunit beta', found in Nicotiana tabacum (Common tobacco).